The sequence spans 320 residues: MSTKNFRVSDGDWICPDKKCGNVNFARRTSCNRCGREKTTEAKMMKAGGTEIGKTLAEKSRGLFSANDWQCKTCSNVNWARRSECNMCNTPKYAKLEERTGYGGGFNERENVEYIEREESDGEYDEFGRKKKKYRGKAVGPASILKEVEDKESEGEEEDEDEDLSKYKLDEDEDEDDADLSKYNLDASEEEDSNKKKSNRRSRSKSRSSHSRSSSRSSSPSSSRSRSRSRSRSSSSSQSRSRSSSRERSRSRGSKSRSSSRSHRGSSSPRKRSYSSSSSSPERNRKRSRSRSSSSGDRKKRRTRSRSPESQVIGENTKQP.

S9 bears the Phosphoserine mark. The RanBP2-type 1 zinc finger occupies 9–40 (SDGDWICPDKKCGNVNFARRTSCNRCGREKTT). 3 positions are modified to N6-acetyllysine: K18, K54, and K92. A RanBP2-type 2 zinc finger spans residues 65–94 (SANDWQCKTCSNVNWARRSECNMCNTPKYA). The interval 117-320 (REESDGEYDE…QVIGENTKQP (204 aa)) is disordered. Phosphoserine is present on residues S120, S153, S181, S188, and S193. Over residues 150 to 163 (DKESEGEEEDEDED) the composition is skewed to acidic residues. The tract at residues 151–320 (KESEGEEEDE…QVIGENTKQP (170 aa)) is required for nuclear targeting. The span at 196-210 (KKSNRRSRSKSRSSH) shows a compositional bias: basic residues. Low complexity-rich tracts occupy residues 211–224 (SRSSSRSSSPSSSR) and 232–242 (RSSSSSQSRSR). Residues 251 to 273 (SRGSKSRSSSRSHRGSSSPRKRS) are compositionally biased toward basic residues.

It belongs to the ZRANB2 family. As to quaternary structure, interacts with the C-terminal half of SNRP70/U1-70K, the Arg/Ser-rich domain of AKAP17A as well as with U2AF1 and CLK1. Phosphorylated on Ser-310 upon DNA damage, probably by ATM or ATR.

It localises to the nucleus. Splice factor required for alternative splicing of TRA2B/SFRS10 transcripts. Binds to ssRNA containing the consensus sequence 5'-AGGUAA-3'. May interfere with constitutive 5'-splice site selection. The protein is Zinc finger Ran-binding domain-containing protein 2 of Pongo abelii (Sumatran orangutan).